The sequence spans 309 residues: Olfactory receptor 5B21 (309 aa).

At 1-26 (MENSTEVTEFILLGLTDDPNLQIPLL) the chain is on the extracellular side. N3 carries N-linked (GlcNAc...) asparagine glycosylation. The chain crosses the membrane as a helical span at residues 27–47 (LAFLFIYLITLLGNGGMMVII). The Cytoplasmic segment spans residues 48–55 (HSDSHLHT). Residues 56–76 (PMYFFLSNLSLVDLGYSSAVA) form a helical membrane-spanning segment. Residues 77–95 (PKTVAALRSGDKAISYDGC) are Extracellular-facing. A disulfide bridge connects residues C95 and C177. The chain crosses the membrane as a helical span at residues 96 to 116 (AAQFFFFVGFATVECYLLASM). Over 117–137 (AYDRHAAVCRPLHYTTTMTAG) the chain is Cytoplasmic. Residues 138–158 (VCALLATGSYVSGFLNASIHA) traverse the membrane as a helical segment. Over 159–199 (AGTFRLSFCGSNEINHFFCDIPPLLALSCSDTRISKLVVFV) the chain is Extracellular. Residues 200–220 (AGFNVFFTLLVILISYFFICI) form a helical membrane-spanning segment. Over 221-235 (TIQRMHSAEGQKKVF) the chain is Cytoplasmic. Residues 236–256 (STCASHLTALSIFYGTIIFMY) form a helical membrane-spanning segment. Residues 257-270 (LQPNSSQSVDTDKI) lie on the Extracellular side of the membrane. The N-linked (GlcNAc...) asparagine glycan is linked to N260. The helical transmembrane segment at 271 to 291 (ASVFYTVVIPMLNPLIYSLRN) threads the bilayer. Residues 292–309 (KEVKSALWKILNKLYPQY) lie on the Cytoplasmic side of the membrane.

Belongs to the G-protein coupled receptor 1 family.

It is found in the cell membrane. In terms of biological role, odorant receptor. This is Olfactory receptor 5B21 from Homo sapiens (Human).